The chain runs to 732 residues: Elongation factor 2 (732 aa).

A tr-type G domain is found at 19–260 (ERIRNIGIAA…MVVKHLPNPI (242 aa)). Residues 28 to 35 (AHIDHGKT), 94 to 98 (DTPGH), and 148 to 151 (NKVD) each bind GTP. Residue histidine 597 is modified to Diphthamide.

This sequence belongs to the TRAFAC class translation factor GTPase superfamily. Classic translation factor GTPase family. EF-G/EF-2 subfamily.

Its subcellular location is the cytoplasm. Catalyzes the GTP-dependent ribosomal translocation step during translation elongation. During this step, the ribosome changes from the pre-translocational (PRE) to the post-translocational (POST) state as the newly formed A-site-bound peptidyl-tRNA and P-site-bound deacylated tRNA move to the P and E sites, respectively. Catalyzes the coordinated movement of the two tRNA molecules, the mRNA and conformational changes in the ribosome. This is Elongation factor 2 (fusA) from Pyrococcus abyssi (strain GE5 / Orsay).